We begin with the raw amino-acid sequence, 130 residues long: Ribonuclease VapC4 (130 aa).

The 124-residue stretch at 7–130 (LADTSVFIGI…AMPDVEVITI (124 aa)) folds into the PINc domain. Mg(2+)-binding residues include aspartate 9 and aspartate 98.

The protein belongs to the PINc/VapC protein family. In terms of assembly, interacts with cognate antitoxin VapB4. Mg(2+) is required as a cofactor.

The protein localises to the secreted. Functionally, toxic component of a type II toxin-antitoxin (TA) system. Probably exerts its toxic effect by binding to mRNA, inhibiting translation. Binds to, recognizes and cleaves ssRNA at ACGC and AC(A/U)GC sequences, usually between the G and C; cleavage is not very efficient, nor is cleavage required to inhibit protein synthesis. Upon expression in situ, in M.smegmatis or E.coli inhibits cell growth and colony formation; in at least E.coli also causes increased levels of cellular RNA. Its toxic effect is neutralized by coexpression with cognate antitoxin VapB4. This Mycobacterium tuberculosis (strain ATCC 25618 / H37Rv) protein is Ribonuclease VapC4.